A 360-amino-acid chain; its full sequence is Peptide chain release factor 1 (360 aa).

Residue Gln-235 is modified to N5-methylglutamine.

Belongs to the prokaryotic/mitochondrial release factor family. Methylated by PrmC. Methylation increases the termination efficiency of RF1.

The protein resides in the cytoplasm. Its function is as follows. Peptide chain release factor 1 directs the termination of translation in response to the peptide chain termination codons UAG and UAA. The sequence is that of Peptide chain release factor 1 from Bordetella pertussis (strain Tohama I / ATCC BAA-589 / NCTC 13251).